Reading from the N-terminus, the 434-residue chain is Guanosine-inosine kinase (434 aa).

Residues 40–45, 93–97, and Arg-198 contribute to the GMP site; these read DQTLVD and GTIGN. Residues 284–289, Gly-357, and Asn-402 each bind ATP; that span reads TAGPIG.

The protein belongs to the carbohydrate kinase PfkB family. Mg(2+) serves as cofactor.

It catalyses the reaction guanosine + ATP = GMP + ADP + H(+). It carries out the reaction inosine + ATP = IMP + ADP + H(+). Its pathway is purine metabolism; IMP biosynthesis via salvage pathway; IMP from inosine: step 1/1. The protein operates within purine metabolism; GMP biosynthesis via salvage pathway. In terms of biological role, catalyzes the phosphorylation of guanosine and inosine to GMP and IMP, respectively. The polypeptide is Guanosine-inosine kinase (Escherichia coli O157:H7).